A 428-amino-acid chain; its full sequence is Chaperone SurA (428 aa).

The signal sequence occupies residues 1–13; sequence MLGALLLSGAVHA. 2 consecutive PpiC domains span residues 164-265 and 276-375; these read SEEF…KLLE and RDEV…EVLG.

It localises to the periplasm. It catalyses the reaction [protein]-peptidylproline (omega=180) = [protein]-peptidylproline (omega=0). Functionally, chaperone involved in the correct folding and assembly of outer membrane proteins. Recognizes specific patterns of aromatic residues and the orientation of their side chains, which are found more frequently in integral outer membrane proteins. May act in both early periplasmic and late outer membrane-associated steps of protein maturation. This Pseudomonas savastanoi pv. phaseolicola (strain 1448A / Race 6) (Pseudomonas syringae pv. phaseolicola (strain 1448A / Race 6)) protein is Chaperone SurA.